The chain runs to 625 residues: Chaperone protein HtpG (625 aa).

The interval 1 to 332 (MSKKTNAPVQ…TEDLSLNVSR (332 aa)) is a; substrate-binding. Residues 333 to 545 (EVVQSSPVMA…KDAMDSQMER (213 aa)) are b. The interval 546 to 625 (MMKMMQQEMP…ELIEAATLSR (80 aa)) is c.

Belongs to the heat shock protein 90 family. In terms of assembly, homodimer.

It localises to the cytoplasm. Molecular chaperone. Has ATPase activity. The chain is Chaperone protein HtpG from Chlorobium phaeovibrioides (strain DSM 265 / 1930) (Prosthecochloris vibrioformis (strain DSM 265)).